A 323-amino-acid polypeptide reads, in one-letter code: Ribonuclease Z (323 aa).

Zn(2+) is bound by residues His-62, His-64, Asp-66, His-67, His-140, Asp-211, and His-270. The active-site Proton acceptor is the Asp-66.

The protein belongs to the RNase Z family. As to quaternary structure, homodimer. It depends on Zn(2+) as a cofactor.

It catalyses the reaction Endonucleolytic cleavage of RNA, removing extra 3' nucleotides from tRNA precursor, generating 3' termini of tRNAs. A 3'-hydroxy group is left at the tRNA terminus and a 5'-phosphoryl group is left at the trailer molecule.. Functionally, zinc phosphodiesterase, which displays some tRNA 3'-processing endonuclease activity. Probably involved in tRNA maturation, by removing a 3'-trailer from precursor tRNA. The sequence is that of Ribonuclease Z from Marinobacter nauticus (strain ATCC 700491 / DSM 11845 / VT8) (Marinobacter aquaeolei).